We begin with the raw amino-acid sequence, 242 residues long: HTH-type transcriptional regulator GadW (242 aa).

The region spanning 139 to 236 is the HTH araC/xylS-type domain; it reads GKVERLISFD…GVTPHQFSQH (98 aa). 2 consecutive DNA-binding regions (H-T-H motif) follow at residues 156–177 and 203–226; these read RDIA…QDEN and LHTI…RQYY.

As to quaternary structure, homodimer.

Depending on the conditions (growth phase and medium), acts as a positive or negative regulator of gadA and gadBC. Repression occurs directly or via the repression of the expression of gadX. Activation occurs directly by the binding of GadW to the gadA and gadBC promoters. This is HTH-type transcriptional regulator GadW (gadW) from Escherichia coli O6:H1 (strain CFT073 / ATCC 700928 / UPEC).